The sequence spans 219 residues: Small ribosomal subunit protein uS5 (219 aa).

The tract at residues 1 to 32 (MSHPQSRPGGRDGRPRRRREPREEAPWVPKTA) is disordered. The S5 DRBM domain maps to 68–131 (LKTEVVDVGI…NQALLNVGPI (64 aa)).

Belongs to the universal ribosomal protein uS5 family. As to quaternary structure, part of the 30S ribosomal subunit. Contacts protein S4.

Its function is as follows. With S4 and S12 plays an important role in translational accuracy. The sequence is that of Small ribosomal subunit protein uS5 (rps5) from Cenarchaeum symbiosum (strain A).